We begin with the raw amino-acid sequence, 134 residues long: Small ribosomal subunit protein uS9 (134 aa).

Positions 109–134 (KGDPRRKEPKKFGGRGARARRQKSYR) are disordered. The span at 115-134 (KEPKKFGGRGARARRQKSYR) shows a compositional bias: basic residues.

This sequence belongs to the universal ribosomal protein uS9 family.

The sequence is that of Small ribosomal subunit protein uS9 from Methanopyrus kandleri (strain AV19 / DSM 6324 / JCM 9639 / NBRC 100938).